The sequence spans 379 residues: Gonadotropin-releasing hormone II receptor (379 aa).

Topologically, residues 1-40 (MSAGNGTPWGSAVGEEAWAGSGVAVEGSELPTFSTAAKVR) are extracellular. The helical transmembrane segment at 41 to 60 (VGVTIVLFVSSAGGNLAVLW) threads the bilayer. Over 61–76 (SVTRPQPSQLRPSPVR) the chain is Cytoplasmic. Residues 77-96 (TLFAHLAAADLLVTFVVMPL) traverse the membrane as a helical segment. At 97 to 114 (DATWNITVQWLAGDIACR) the chain is on the extracellular side. Asn101 is a glycosylation site (N-linked (GlcNAc...) asparagine). The cysteines at positions 113 and 188 are disulfide-linked. Residues 115–136 (TLMFLKLMAMYSAAFLPVVIGL) traverse the membrane as a helical segment. Residues 137-160 (DRQAAVLNPLGSRSGVRKLLGAAW) lie on the Cytoplasmic side of the membrane. Residues 161 to 178 (GLSFLLALPQLFLFHTVH) traverse the membrane as a helical segment. Residues 179 to 204 (RAGPVPFTQCVTKGSFKARWQETTYN) lie on the Extracellular side of the membrane. A helical membrane pass occupies residues 205–224 (LFTFCCLFLLPLIAMAICYS). At 225 to 278 (RIVLSVSSPQTRKGSHAPAGEFALRRSFDNRPRVCLRALRLALLILLTFILCWT) the chain is on the cytoplasmic side. Residues 279 to 297 (PYYLLGLWYWFSPTMLTEV) traverse the membrane as a helical segment. At 298-303 (PPSLSH) the chain is on the extracellular side. Residues 304 to 323 (ILFLFGLLNAPLDPLLYGAF) form a helical membrane-spanning segment. At 324-379 (TFGCRRGHQELSIDSSKEGSGRMLQQEIHALRQQEVQKTVTSRSAGETKGISITSI) the chain is on the cytoplasmic side.

Belongs to the G-protein coupled receptor 1 family. In terms of processing, phosphorylated on the C-terminal cytoplasmic tail.

The protein localises to the cell membrane. Functionally, receptor for gonadotropin releasing hormone II (GnRH II). This receptor mediates its action by association with G proteins that activate a phosphatidylinositol-calcium second messenger system. The polypeptide is Gonadotropin-releasing hormone II receptor (GNRHR2) (Chlorocebus aethiops (Green monkey)).